The following is a 184-amino-acid chain: MSEIVSVSGGPTKPEIIAVSLSKLGLQDGDRFADVGCGTGSVSIEAARIARNLTIYAIDARKEALLATEANFKSFGIENARVLAGEASELLGSGGSIDSIDCAFVGGTKNIDAILEKLVEKKTRSIVVNAVRIETVVRTIEAMKKLGIFDEVVHISVSRSAPIAGETMFKPENPVYIVVGKKQA.

Residues T12, 36-40 (GCGTG), D59, and A87 contribute to the S-adenosyl-L-methionine site.

It belongs to the methyltransferase superfamily. Archaeal-type CbiT family.

It carries out the reaction Co-precorrin-6B + S-adenosyl-L-methionine = Co-precorrin-7 + S-adenosyl-L-homocysteine + CO2. The protein operates within cofactor biosynthesis; adenosylcobalamin biosynthesis; cob(II)yrinate a,c-diamide from sirohydrochlorin (anaerobic route): step 8/10. Catalyzes the methylation of C-15 in cobalt-precorrin-6B followed by the decarboxylation of C-12 to form cobalt-precorrin-7. This Methanosarcina acetivorans (strain ATCC 35395 / DSM 2834 / JCM 12185 / C2A) protein is Probable cobalt-precorrin-6B C(15)-methyltransferase (decarboxylating).